The following is a 194-amino-acid chain: Imidazoleglycerol-phosphate dehydratase (194 aa).

The protein belongs to the imidazoleglycerol-phosphate dehydratase family.

Its subcellular location is the cytoplasm. The catalysed reaction is D-erythro-1-(imidazol-4-yl)glycerol 3-phosphate = 3-(imidazol-4-yl)-2-oxopropyl phosphate + H2O. The protein operates within amino-acid biosynthesis; L-histidine biosynthesis; L-histidine from 5-phospho-alpha-D-ribose 1-diphosphate: step 6/9. This is Imidazoleglycerol-phosphate dehydratase from Thermoanaerobacter pseudethanolicus (strain ATCC 33223 / 39E) (Clostridium thermohydrosulfuricum).